A 149-amino-acid chain; its full sequence is Probable flagellum biosynthesis repressor protein FlbT (149 aa).

Belongs to the FlbT family.

Has a post-transcriptional repressor function in flagellum biogenesis. Associates with the 5'-UTR of fljK mRNA and promotes its degradation. The polypeptide is Probable flagellum biosynthesis repressor protein FlbT (Agrobacterium fabrum (strain C58 / ATCC 33970) (Agrobacterium tumefaciens (strain C58))).